Reading from the N-terminus, the 344-residue chain is tRNA(Ile)-lysidine synthase (344 aa).

Residue 43–48 (SGGADS) coordinates ATP.

The protein belongs to the tRNA(Ile)-lysidine synthase family.

The protein localises to the cytoplasm. The enzyme catalyses cytidine(34) in tRNA(Ile2) + L-lysine + ATP = lysidine(34) in tRNA(Ile2) + AMP + diphosphate + H(+). Its function is as follows. Ligates lysine onto the cytidine present at position 34 of the AUA codon-specific tRNA(Ile) that contains the anticodon CAU, in an ATP-dependent manner. Cytidine is converted to lysidine, thus changing the amino acid specificity of the tRNA from methionine to isoleucine. This is tRNA(Ile)-lysidine synthase from Bordetella parapertussis (strain 12822 / ATCC BAA-587 / NCTC 13253).